The chain runs to 177 residues: Large ribosomal subunit protein uL6 (177 aa).

The protein belongs to the universal ribosomal protein uL6 family. In terms of assembly, part of the 50S ribosomal subunit.

Functionally, this protein binds to the 23S rRNA, and is important in its secondary structure. It is located near the subunit interface in the base of the L7/L12 stalk, and near the tRNA binding site of the peptidyltransferase center. The protein is Large ribosomal subunit protein uL6 of Cupriavidus taiwanensis (strain DSM 17343 / BCRC 17206 / CCUG 44338 / CIP 107171 / LMG 19424 / R1) (Ralstonia taiwanensis (strain LMG 19424)).